We begin with the raw amino-acid sequence, 2053 residues long: MTTRGANPVLCLVGQACRDNADRPAVEDGYGNRLSYAQLDEKSTEVAQYLSGLGARPGEIIPLLTSSCPEMVIGVLGIIKAGCTYVPIDRVQWPQNRIDEVLKRCNPRIALYTGGEIQIENCETVRLPLCPRKVAPRHENSSSLGPEIMCIIFTSGTTNKPKAVQIRSTSVAALVSSPAFNYDVQPGDRVLLVLSVAFDACMATLFSTLCNGGTVMLANTHNFQQVGSRCNILVLTPSILESLRPPTLFSDYEDVQKIILGGETPSRALLKSWSVLQIPIWIAYGPTEATCAVLTECLERSATTGDYYPNRFGRVIPGGSLLLLDDDNKVVEELNNERELCIAGECLAAGYWKDEEKTRTHFVVHKGERVYRTGDIAKWVLSDQGSLVLELCGRRDRVAKVRGFLVNLDHDVDACLMQLDENVKAAFSLVIDGRLCTAIVCAGSINEKQLRVQWRKRSPPYMISDHICSFESLPLTPNGKIEPKGVARLLEAQLPTPVLNPKRSYASVDEVIVDKASSLLGLPAAEICLEASLVSQGLHSLAAAKLSAFCHQRGFEVPVEDILTQPSVAHLITVCRERRPQVSLPYCAVDAVPEENVIIPFHQKLILASLNDPSLYCVKHVSHHSTIDIPKLKAAWMSVVAAEPGLRTVFKVQDTIITRHVGLPKDVRWMETVVGSHEDIQREIALLDQDTGLGSQFRVLNFRGPKLPPGESMLVWAIHHALIDGFSASLIFERLDALVRGEDLESSPAYTLVARDVIQYQALIAPKAETFWKQQTEAYPTASSDLLLPESSGENGKGYATYTLSQKLNLSSIDEIARKARVTPAAIFFAAWALVLGLYTGSDTVLFGAVLSGRNLPFEWAQRFVGALINTLPLRMRVARTDTPVNLLQSVHRTVQALSSICAARPPADAPKVTTALVIQEDGLKDGSCEIRGLKEPYVHECVDIPLLAAVEGDKLRFLYHQGSMSGVQIEGIASAFLNSIVALTDPKIHYLKGAFARQISPPIRQRVLEAGNISSPATRMDSQVHTVPAMFYSAAARNPTNIAVDKAGSTLTYHALAEYVTIVSHVVQALVPQGEAVAVLADRSINWVIAAFAALAANTIYCPLDSTYESAYRSTLLRRSKAKLLLVPRACTEVQACGNVITLGVDQILSLNIEPSLCSQRPPGPSDTAYLCFTSGSTGQPKGVLCEHRGVVALQSSPEFRLHAQPGVRVAQFLASGFDGCIYELFGALCYGGTLVLRTHDHDSFSHLKDVDAAMINPSVAGQLNPCDYPNLKYWFLQLAFGGEPVPETIADRWASGRMLYNAYGPTEASIQSCQQLLLKGKPVTIGRPLPTTRLYILNDHLELQPPGTVGDIYVAGVQVSKGYLDQPEATARDFMLDPFATWSSNERMYRTGDLGFWDKDWNLHCCGRRDRQVKLRGYRVSLDGIATIAHQSMSQIHAAIAVIQNERIALWVEPATVCIHTLHQKLSTALPPHAVPRNIRAVEKIPLSTNGKLHAKALLETPDMDPPDSLESVPDTSVKKIIEDEWRKILGQSSSVTVRGSDEFLVHGGDSLLQLTLAARMKQVFRVPITPTDIIQSVSFDDIVALVEGKIRAKSLHDDLQGELNATASLGQKDVSSAELWWVYRYLNSQCQSGFNVPYVANLSPSVDRHRLATSLETVFNRHRILRSRFEVIDGTAQRVIADEPIVVSIVPAADVDTFVNLPFDITRGPLVRAIIAPSLLAITISHIVCDLTALKVILQETATLYGGDQLQPVEREYFDITTWNQPIEPAKAEFWTKSLEGLVLDYADKAKQSRSYRGTSVVGTVPARLYRKLVTRTIKRGSTLHQLGLTVSALVLHILSQRNHICLGSPYINRLSTEDQTVVGLCLEPLPIRIRIDAMQCTADDLIQQVRQASQSTLAHAVPWSTLLAHLGLPVQTDSSQIFDCVVTFHDDRAKTQMLPIDGISHRQIYPEGSKFAMLFEWHALPERLQLRLEYDSDHITPDIAQLVQFLSLHCAELVLNAKMKNLHIQQELKRALKQKCRELRLNIDDVRNVAREFLVSASKSKGKRS.

An adenylation 1 region spans residues 16–402; the sequence is ACRDNADRPA…GRRDRVAKVR (387 aa). Residues 503–579 enclose the Carrier 1 domain; that stretch reads RSYASVDEVI…HLITVCRERR (77 aa). Position 540 is an O-(pantetheine 4'-phosphoryl)serine (S540). The condensation 1 stretch occupies residues 611-896; it reads NDPSLYCVKH…LLQSVHRTVQ (286 aa). The adenylation 2 stretch occupies residues 1034 to 1418; sequence SAAARNPTNI…GRRDRQVKLR (385 aa). Positions 1515 to 1593 constitute a Carrier 2 domain; it reads VPDTSVKKII…DIVALVEGKI (79 aa). S1553 bears the O-(pantetheine 4'-phosphoryl)serine mark. A condensation 2 region spans residues 1630–1981; that stretch reads NSQCQSGFNV…LQLRLEYDSD (352 aa).

It belongs to the NRP synthetase family. The cofactor is pantetheine 4'-phosphate.

It functions in the pathway secondary metabolite biosynthesis. Functionally, nonribosomal peptide synthetase; part of the gene cluster that mediates the biosynthesis of protubonine B, a hydroxylated and diacetylated cyclo-L-Trp-L-Leu derivative. The first step of the protubonine B synthesis is performed by the nonribosomal peptide synthetase pboA that catalyzes the formation of cyclo-L-Trp-L-Leu by condensing L-Leu with L-Trp. The flavin-dependent monooxygenase pboD is responsible for hydroxylation at C-3 of the indole ring and subsequent formation of the pyrrolidine ring, leadind to protubonine D. Protubonine D is further diacetylated by two acetyltransferases, pboB and pboC, to form the final product protubonine B via protubonine C. This Aspergillus ustus protein is Nonribosomal peptide synthetase pboA.